The following is a 455-amino-acid chain: MAAREEVLALQAEVARREEELSSLKHRLAAALLAEQESERLLPVSPLPPKAALSQDEILRYSRQLVLPELGVQGQLRLATASVLIVGCGGLGCPLAQYLAAAGVGRLGLVDYDVVEVSNLARQVLHGEALAGQAKVFSAAASLRRLNSAVECVPYAQALTPATALDLVRRYDVVADCSDNVPTRYLVNDACVLAGRPLVSASALRFEGQITVYHYGGGPCYRCVFPQPPPAETVTNCADGGVLGVVTGVLGCLQALEVLKIAAGLGPSYSGSLLLFDALRGLFRRIQLRRRRPDCAACGERPTVTELQDYEGFCGSSATDKCRSLQLLSPEERVSVIDYKRLLDSGSPHLLLDVRPQVEVDICRLPHALHIPLKHLERRDAESLKLLGEAIREGKQGTQEGASLPIYVICKLGNDSQKAVKILQSLPDLDSLLVQDVVGGLMAWAAKVDGTFPQY.

ATP is bound by residues G90, D111, 118 to 122 (SNLAR), K135, and 179 to 180 (DN). The interaction with NFS1 stretch occupies residues 156 to 236 (AQALTPATAL…QPPPAETVTN (81 aa)). Residues C220 and C223 each coordinate Zn(2+). C237 (glycyl thioester intermediate; for adenylyltransferase activity) is an active-site residue. Zn(2+)-binding residues include C295 and C298. Cysteines 314 and 322 form a disulfide. Residues 345 to 453 (SGSPHLLLDV…WAAKVDGTFP (109 aa)) form the Rhodanese domain. C410 serves as the catalytic Cysteine persulfide intermediate; for sulfurtransferase activity. C410 carries the post-translational modification Cysteine persulfide.

It in the N-terminal section; belongs to the HesA/MoeB/ThiF family. UBA4 subfamily. Interacts with NFS1. Requires Zn(2+) as cofactor.

It localises to the cytoplasm. The protein localises to the cytosol. It carries out the reaction [molybdopterin-synthase sulfur-carrier protein]-C-terminal Gly-Gly + ATP + H(+) = [molybdopterin-synthase sulfur-carrier protein]-C-terminal Gly-Gly-AMP + diphosphate. It catalyses the reaction [molybdopterin-synthase sulfur-carrier protein]-C-terminal Gly-Gly-AMP + S-sulfanyl-L-cysteinyl-[cysteine desulfurase] + AH2 = [molybdopterin-synthase sulfur-carrier protein]-C-terminal-Gly-aminoethanethioate + L-cysteinyl-[cysteine desulfurase] + A + AMP + 2 H(+). The protein operates within tRNA modification; 5-methoxycarbonylmethyl-2-thiouridine-tRNA biosynthesis. Its pathway is cofactor biosynthesis; molybdopterin biosynthesis. In terms of biological role, plays a central role in 2-thiolation of mcm(5)S(2)U at tRNA wobble positions of cytosolic tRNA(Lys), tRNA(Glu) and tRNA(Gln). Also essential during biosynthesis of the molybdenum cofactor. Acts by mediating the C-terminal thiocarboxylation of sulfur carriers URM1 and MOCS2A. Its N-terminus first activates URM1 and MOCS2A as acyl-adenylates (-COAMP), then the persulfide sulfur on the catalytic cysteine is transferred to URM1 and MOCS2A to form thiocarboxylation (-COSH) of their C-terminus. The reaction probably involves hydrogen sulfide that is generated from the persulfide intermediate and that acts as a nucleophile towards URM1 and MOCS2A. Subsequently, a transient disulfide bond is formed. Does not use thiosulfate as sulfur donor; NFS1 acting as a sulfur donor for thiocarboxylation reactions. This chain is Adenylyltransferase and sulfurtransferase MOCS3, found in Sus scrofa (Pig).